Consider the following 78-residue polypeptide: Sperm-specific protein Phi-0 (78 aa).

Basic residues-rich tracts occupy residues 1-21 (MVAR…RSAA), 31-57 (AASR…KPKA), and 64-78 (VRRR…SVSK). Positions 1 to 78 (MVARRQTKKA…RRIRRASVSK (78 aa)) are disordered.

It is found in the nucleus. It localises to the chromosome. In terms of biological role, involved in nuclear basic protein transition: histones are replaced by spermatid specific proteins which are themselves replaced by protamines in late spermatids. The polypeptide is Sperm-specific protein Phi-0 (Holothuria tubulosa (Tubular sea cucumber)).